The sequence spans 754 residues: Probable beta-glucosidase D (754 aa).

The N-terminal stretch at 1-20 is a signal peptide; sequence MKVLSFIVAAALLGLTGASS. N-linked (GlcNAc...) asparagine glycosylation is found at Asn66, Asn69, and Asn186. Positions 186–206 are disordered; it reads NRTGGGGGGGGDSGSAPYSSN. Over residues 188-198 the composition is skewed to gly residues; that stretch reads TGGGGGGGGDS. Residue Asn239 is glycosylated (N-linked (GlcNAc...) asparagine). Residue Asp267 is part of the active site. Asn301, Asn345, Asn443, Asn512, Asn534, Asn573, Asn588, Asn655, and Asn745 each carry an N-linked (GlcNAc...) asparagine glycan.

The protein belongs to the glycosyl hydrolase 3 family.

Its subcellular location is the secreted. It carries out the reaction Hydrolysis of terminal, non-reducing beta-D-glucosyl residues with release of beta-D-glucose.. It participates in glycan metabolism; cellulose degradation. Functionally, beta-glucosidases are one of a number of cellulolytic enzymes involved in the degradation of cellulosic biomass. Catalyzes the last step releasing glucose from the inhibitory cellobiose. This Aspergillus niger (strain ATCC MYA-4892 / CBS 513.88 / FGSC A1513) protein is Probable beta-glucosidase D (bglD).